The chain runs to 191 residues: Hypoxanthine/guanine phosphoribosyltransferase (191 aa).

This sequence belongs to the purine/pyrimidine phosphoribosyltransferase family. Archaeal HPRT subfamily. In terms of assembly, homodimer.

Its subcellular location is the cytoplasm. The enzyme catalyses IMP + diphosphate = hypoxanthine + 5-phospho-alpha-D-ribose 1-diphosphate. It catalyses the reaction GMP + diphosphate = guanine + 5-phospho-alpha-D-ribose 1-diphosphate. The protein operates within purine metabolism; IMP biosynthesis via salvage pathway; IMP from hypoxanthine: step 1/1. Catalyzes a salvage reaction resulting in the formation of IMP that is energically less costly than de novo synthesis. This Methanocella arvoryzae (strain DSM 22066 / NBRC 105507 / MRE50) protein is Hypoxanthine/guanine phosphoribosyltransferase.